A 210-amino-acid chain; its full sequence is Protein MSO1 (210 aa).

Met-1 is modified (N-acetylmethionine). At Met-2 the chain carries N-acetylserine. Residues 88–210 (KHDMKKQNSR…LKRRNNDYGF (123 aa)) form a disordered region. At Ser-102 the chain carries Phosphoserine. Residues 117-141 (TPSSNGNTPEYTPASKSFQDIYNNH) are compositionally biased toward polar residues. Composition is skewed to low complexity over residues 142 to 161 (TSSSSATPRRASSRPTRPSA) and 172 to 183 (SKTSNSFNTSST).

In terms of assembly, interacts physically with SEC1.

In terms of biological role, involved in secretion. Component of the secretory vesicle docking complex. This is Protein MSO1 (MSO1) from Saccharomyces cerevisiae (strain ATCC 204508 / S288c) (Baker's yeast).